A 255-amino-acid chain; its full sequence is Cytochrome c oxidase subunit 2 (255 aa).

The N-terminal stretch at 1 to 16 (MFNLFPPFGANTAIFN) is a signal peptide. Residues 17 to 43 (DAPQPWQVGFQDGASPTQEGITELHDS) are Mitochondrial intermembrane-facing. The helical transmembrane segment at 44-64 (IFFYLVIICFGVLWVLSSVIV) threads the bilayer. Over 65 to 80 (NFNSNKSQLVYKYANH) the chain is Mitochondrial matrix. A helical membrane pass occupies residues 81-101 (GTLIELIWTITPALVLIAIAF). Over 102–255 (PSFKLLYLMD…KYLAWIDSQA (154 aa)) the chain is Mitochondrial intermembrane. H189, C224, E226, C228, H232, and M235 together coordinate Cu cation. E226 provides a ligand contact to Mg(2+).

The protein belongs to the cytochrome c oxidase subunit 2 family. In terms of assembly, component of the cytochrome c oxidase (complex IV, CIV), a multisubunit enzyme composed of a catalytic core of 3 subunits and several supernumerary subunits. The complex exists as a monomer or a dimer and forms supercomplexes (SCs) in the inner mitochondrial membrane with ubiquinol-cytochrome c oxidoreductase (cytochrome b-c1 complex, complex III, CIII). Cu cation serves as cofactor.

It localises to the mitochondrion inner membrane. It carries out the reaction 4 Fe(II)-[cytochrome c] + O2 + 8 H(+)(in) = 4 Fe(III)-[cytochrome c] + 2 H2O + 4 H(+)(out). Component of the cytochrome c oxidase, the last enzyme in the mitochondrial electron transport chain which drives oxidative phosphorylation. The respiratory chain contains 3 multisubunit complexes succinate dehydrogenase (complex II, CII), ubiquinol-cytochrome c oxidoreductase (cytochrome b-c1 complex, complex III, CIII) and cytochrome c oxidase (complex IV, CIV), that cooperate to transfer electrons derived from NADH and succinate to molecular oxygen, creating an electrochemical gradient over the inner membrane that drives transmembrane transport and the ATP synthase. Cytochrome c oxidase is the component of the respiratory chain that catalyzes the reduction of oxygen to water. Electrons originating from reduced cytochrome c in the intermembrane space (IMS) are transferred via the dinuclear copper A center (CU(A)) of subunit 2 and heme A of subunit 1 to the active site in subunit 1, a binuclear center (BNC) formed by heme A3 and copper B (CU(B)). The BNC reduces molecular oxygen to 2 water molecules using 4 electrons from cytochrome c in the IMS and 4 protons from the mitochondrial matrix. The protein is Cytochrome c oxidase subunit 2 (COX2) of Mycosarcoma maydis (Corn smut fungus).